The sequence spans 418 residues: AADGYARARGVGACVVTFTVGGLSVLNAIAGAYSENLPLICIVGGPNSNDYGTNRILHHTIGLQDFSQEPRCFQTVTCYRAVVNNLEDAHELIDTAVSTALKESKPVYISIGCNLPGIPHPTFSREPVPFALSPRLSNMMGLEAAVEAAAEFLNKAVKPVLVGGPKMRVAKASDAFVELSDACGYAVAVMPSAKGLFPEHHSHFIGTYWGAVSTAFCAEIVESADAYLFAGPIFNDYSSVGYSLLLKKEKAIIVQPDRVTIGNGPAFGCVLMRDFLAALAKRLKHNPTAFENYHRIYVPEGHPLKCEPKEALRVNVLFQHIQNMLSGDSVVIAETGDSWFNCQKLKLPKGCGYEFQMQYGSIGWSVGATLGYAQAAPEKRVIACIGDGSFQVTAQDISTMLRCGQRTIIFLINNGGYT.

Residue His59 coordinates substrate. Positions 337–418 (DSWFNCQKLK…IFLINNGGYT (82 aa)) are thiamine pyrophosphate binding. Asp387, Asn414, and Gly416 together coordinate Mg(2+).

Belongs to the TPP enzyme family. In terms of assembly, homotetramer. The cofactor is a metal cation. It depends on thiamine diphosphate as a cofactor. As to expression, leaves.

The catalysed reaction is a 2-oxocarboxylate + H(+) = an aldehyde + CO2. The polypeptide is Pyruvate decarboxylase 1 (PDC1) (Nicotiana tabacum (Common tobacco)).